The sequence spans 522 residues: Protein DETOXIFICATION 31 (522 aa).

12 consecutive transmembrane segments (helical) span residues glycine 89 to isoleucine 109, valine 113 to cysteine 133, valine 154 to leucine 174, isoleucine 183 to isoleucine 203, isoleucine 217 to leucine 237, leucine 249 to phenylalanine 269, alanine 299 to leucine 319, valine 324 to phenylalanine 344, valine 371 to phenylalanine 391, methionine 415 to glycine 435, valine 441 to leucine 461, and glycine 471 to isoleucine 491.

It belongs to the multi antimicrobial extrusion (MATE) (TC 2.A.66.1) family.

It localises to the membrane. Positively mediates root hair elongation. This Arabidopsis thaliana (Mouse-ear cress) protein is Protein DETOXIFICATION 31.